The following is a 216-amino-acid chain: Putative F-box protein At2g03610 (216 aa).

One can recognise an F-box domain in the interval 19–69 (NQDWSKLCPDLLRPILESLSSIDFHRAKTVCSDWYSVWKTCKGYDSKWNQN).

This is Putative F-box protein At2g03610 from Arabidopsis thaliana (Mouse-ear cress).